The sequence spans 237 residues: Pyridoxal phosphate homeostasis protein (237 aa).

Residue Lys31 is modified to N6-(pyridoxal phosphate)lysine.

Belongs to the pyridoxal phosphate-binding protein YggS/PROSC family.

The protein localises to the cytoplasm. It localises to the nucleus. In terms of biological role, pyridoxal 5'-phosphate (PLP)-binding protein, which may be involved in intracellular homeostatic regulation of pyridoxal 5'-phosphate (PLP), the active form of vitamin B6. This is Pyridoxal phosphate homeostasis protein from Schizosaccharomyces pombe (strain 972 / ATCC 24843) (Fission yeast).